Consider the following 273-residue polypeptide: NADH-ubiquinone oxidoreductase 29.9 kDa subunit, mitochondrial (273 aa).

The transit peptide at 1–8 (MRAALRLL) directs the protein to the mitochondrion.

Belongs to the complex I NDUFA5 subunit family. Complex I is composed of about 40 different subunits.

It is found in the mitochondrion inner membrane. Accessory subunit of the mitochondrial membrane respiratory chain NADH dehydrogenase (Complex I), that is believed not to be involved in catalysis. Complex I functions in the transfer of electrons from NADH to the respiratory chain. The immediate electron acceptor for the enzyme is believed to be ubiquinone. The chain is NADH-ubiquinone oxidoreductase 29.9 kDa subunit, mitochondrial (nuo-32) from Neurospora crassa (strain ATCC 24698 / 74-OR23-1A / CBS 708.71 / DSM 1257 / FGSC 987).